Consider the following 458-residue polypeptide: MTLLIMITLTSISLLLAAAETIPTTLDGPFKPLTRRFEPSLRRGSDDLPMDHPRLRKRNVSSDFPEQIALALSTPTSMWVSWVTGDAIVGKDVKPLDPSSIASEVWYGKEKGNYMLKKKGNATVYSQLYPSDGLLNYTSGIIHHVLIDGLEPETRYYYRCGDSSVPAMSEEISFETLPLPSKDAYPHRIAFVGDLGLTSNTTTTIDHLMENDPSLVIIVGDLTYANQYRTIGGKGVPCFSCSFPDAPIRETYQPRWDAWGRFMEPLTSKVPTMVIEGNHEIEPQASGITFKSYSERFAVPASESGSNSNLYYSFDAGGVHFVMLGAYVDYNNTGLQYAWLKEDLSKVDRAVTPWLVATMHPPWYNSYSSHYQEFECMRQEMEELLYQYRVDIVFAGHVHAYERMNRIYNYTLDPCGPVYITIGDGGNIEKVDVDFADDPGKCHSSYDLFFFNSLNLSN.

The N-terminal stretch at 1-19 is a signal peptide; sequence MTLLIMITLTSISLLLAAA. Residues Asn-59, Asn-121, and Asn-136 are each glycosylated (N-linked (GlcNAc...) asparagine). Residue Asp-194 coordinates Fe cation. An N-linked (GlcNAc...) asparagine glycan is attached at Asn-200. Fe cation-binding residues include Asp-221 and Tyr-224. Asp-221 provides a ligand contact to Mn(2+). Asn-278 is a Mn(2+) binding site. Asn-278 is a binding site for substrate. Asn-331 carries an N-linked (GlcNAc...) asparagine glycan. His-360 is a Mn(2+) binding site. His-370 acts as the Proton donor in catalysis. Residue His-397 participates in Mn(2+) binding. 397–399 contacts substrate; it reads HVH. A Fe cation-binding site is contributed by His-399. 2 N-linked (GlcNAc...) asparagine glycosylation sites follow: Asn-409 and Asn-455.

This sequence belongs to the metallophosphoesterase superfamily. Purple acid phosphatase family. As to quaternary structure, homodimer. Fe cation is required as a cofactor. Requires Mn(2+) as cofactor. As to expression, specifically expressed in flowers.

Its subcellular location is the secreted. The catalysed reaction is a phosphate monoester + H2O = an alcohol + phosphate. Functionally, acid phosphatase activity with ATP, ADP, dATP, pyrophosphate, polyphosphate, phosphoserine and phosphothreonine. Low or no activity with phosphotyrosine, AMP and phytate. The chain is Purple acid phosphatase 23 (PAP23) from Arabidopsis thaliana (Mouse-ear cress).